The sequence spans 195 residues: Small ribosomal subunit protein uS5 (195 aa).

The interval M1–D20 is disordered. In terms of domain architecture, S5 DRBM spans F23–V86. Positions D161–A195 are disordered.

It belongs to the universal ribosomal protein uS5 family. In terms of assembly, part of the 30S ribosomal subunit. Contacts proteins S4 and S8.

In terms of biological role, with S4 and S12 plays an important role in translational accuracy. Located at the back of the 30S subunit body where it stabilizes the conformation of the head with respect to the body. This is Small ribosomal subunit protein uS5 from Methylobacterium radiotolerans (strain ATCC 27329 / DSM 1819 / JCM 2831 / NBRC 15690 / NCIMB 10815 / 0-1).